The following is a 281-amino-acid chain: Elongation factor Ts (281 aa).

Residues 80–83 are involved in Mg(2+) ion dislocation from EF-Tu; that stretch reads TDFV.

It belongs to the EF-Ts family.

Its subcellular location is the cytoplasm. Associates with the EF-Tu.GDP complex and induces the exchange of GDP to GTP. It remains bound to the aminoacyl-tRNA.EF-Tu.GTP complex up to the GTP hydrolysis stage on the ribosome. This Vibrio parahaemolyticus serotype O3:K6 (strain RIMD 2210633) protein is Elongation factor Ts.